The primary structure comprises 83 residues: Toxin To15 (83 aa).

The first 19 residues, 1 to 19 (MKGIILLISCLMLIEVVVG), serve as a signal peptide directing secretion. The region spanning 21–82 (KEGYPLDSSG…IWNAKTNKCY (62 aa)) is the LCN-type CS-alpha/beta domain. Cystine bridges form between C31/C81, C35/C57, C43/C62, and C47/C64.

Belongs to the long (4 C-C) scorpion toxin superfamily. Sodium channel inhibitor family. Beta subfamily. As to expression, expressed by the venom gland.

Its subcellular location is the secreted. Beta toxins bind voltage-independently at site-4 of sodium channels (Nav) and shift the voltage of activation toward more negative potentials thereby affecting sodium channel activation and promoting spontaneous and repetitive firing. This Tityus obscurus (Amazonian scorpion) protein is Toxin To15.